Consider the following 299-residue polypeptide: Recombination-associated protein RdgC (299 aa).

Belongs to the RdgC family.

Its subcellular location is the cytoplasm. It is found in the nucleoid. May be involved in recombination. The polypeptide is Recombination-associated protein RdgC (Laribacter hongkongensis (strain HLHK9)).